We begin with the raw amino-acid sequence, 679 residues long: Cysteine-rich receptor-like protein kinase 29 (679 aa).

Positions 1–23 (MEHVRVIFFFACFLTLAPFHAFA) are cleaved as a signal peptide. The Extracellular segment spans residues 24 to 286 (QVDSYEFDPD…RTGKGKGGSK (263 aa)). Gnk2-homologous domains are found at residues 30–134 (FDPD…NRTI) and 140–249 (TNPT…TWRF). N-linked (GlcNAc...) asparagine glycosylation is found at asparagine 41, asparagine 45, asparagine 71, asparagine 107, asparagine 131, and asparagine 187. A disordered region spans residues 260–281 (PPAIQPADSPQSAARTERTGKG). Residues 287-307 (VIIAIVIPILLVALLAICLCL) form a helical membrane-spanning segment. The Cytoplasmic portion of the chain corresponds to 308–679 (VLKWRKNKSG…DVTVSEFSPR (372 aa)). Residues 357 to 637 (FSSENELGRG…SLMLNSYSFT (281 aa)) enclose the Protein kinase domain. Residues 363–371 (LGRGGFGSV) and lysine 385 each bind ATP. At tyrosine 430 the chain carries Phosphotyrosine. Aspartate 482 serves as the catalytic Proton acceptor. Residue serine 486 is modified to Phosphoserine. Threonine 524 carries the post-translational modification Phosphothreonine. Tyrosine 532 is subject to Phosphotyrosine. The interval 659–679 (SSTEGLQMSSNDVTVSEFSPR) is disordered.

Belongs to the protein kinase superfamily. Ser/Thr protein kinase family. CRK subfamily.

It localises to the membrane. The catalysed reaction is L-seryl-[protein] + ATP = O-phospho-L-seryl-[protein] + ADP + H(+). It carries out the reaction L-threonyl-[protein] + ATP = O-phospho-L-threonyl-[protein] + ADP + H(+). The sequence is that of Cysteine-rich receptor-like protein kinase 29 (CRK29) from Arabidopsis thaliana (Mouse-ear cress).